The chain runs to 331 residues: Cytoskeleton protein RodZ (331 aa).

Residues 1-111 lie on the Cytoplasmic side of the membrane; it reads MNTEATQDHQ…LGKRRKKRDG (111 aa). The HTH cro/C1-type domain maps to 19–71; that stretch reads LRHAREQLGLSQQAVAERLCLKVSTVRDIEDDKAPADLASTFLRGYIRSYARL. Positions 30–49 form a DNA-binding region, H-T-H motif; that stretch reads QQAVAERLCLKVSTVRDIED. A helical; Signal-anchor for type II membrane protein transmembrane segment spans residues 112–132; that stretch reads WLMSFTWLVLFVVIGLSGAWW. Residues 133 to 331 lie on the Periplasmic side of the membrane; the sequence is WQDHKAQQEE…TLNAESSPAQ (199 aa). A compositionally biased stretch (polar residues) spans 146 to 166; it reads MADQSSAELNGGDANSQNVPL. The tract at residues 146–238 is disordered; sequence MADQSSAELN…ASPLPTDQAN (93 aa). 2 stretches are compositionally biased toward low complexity: residues 167 to 202 and 216 to 234; these read DTSAPAAPTADSAANSAPTDTASAPTTSAPAQTPAD and TAGTTPAAPATTPASPLPT.

Belongs to the RodZ family.

The protein localises to the cell inner membrane. Its function is as follows. Cytoskeletal protein that is involved in cell-shape control through regulation of the length of the long axis. This is Cytoskeleton protein RodZ from Klebsiella pneumoniae subsp. pneumoniae (strain ATCC 700721 / MGH 78578).